We begin with the raw amino-acid sequence, 206 residues long: Pyridoxine/pyridoxamine 5'-phosphate oxidase (206 aa).

FMN is bound by residues 53–58, 68–69, Lys75, and Gln97; these read RMVLLK and YT. Residue Lys58 coordinates substrate. Positions 115, 119, and 123 each coordinate substrate. FMN-binding positions include 132 to 133 and Trp177; that span reads QS. 183 to 185 provides a ligand contact to substrate; the sequence is RLH. An FMN-binding site is contributed by Arg187.

The protein belongs to the pyridoxamine 5'-phosphate oxidase family. Homodimer. Requires FMN as cofactor.

The catalysed reaction is pyridoxamine 5'-phosphate + O2 + H2O = pyridoxal 5'-phosphate + H2O2 + NH4(+). The enzyme catalyses pyridoxine 5'-phosphate + O2 = pyridoxal 5'-phosphate + H2O2. It participates in cofactor metabolism; pyridoxal 5'-phosphate salvage; pyridoxal 5'-phosphate from pyridoxamine 5'-phosphate: step 1/1. Its pathway is cofactor metabolism; pyridoxal 5'-phosphate salvage; pyridoxal 5'-phosphate from pyridoxine 5'-phosphate: step 1/1. Functionally, catalyzes the oxidation of either pyridoxine 5'-phosphate (PNP) or pyridoxamine 5'-phosphate (PMP) into pyridoxal 5'-phosphate (PLP). The sequence is that of Pyridoxine/pyridoxamine 5'-phosphate oxidase from Rhizobium etli (strain ATCC 51251 / DSM 11541 / JCM 21823 / NBRC 15573 / CFN 42).